Consider the following 40-residue polypeptide: Photosystem II reaction center protein J (40 aa).

The helical transmembrane segment at 8-28 (IPLWLIGTVTGIPVIGLVGIF) threads the bilayer.

Belongs to the PsbJ family. As to quaternary structure, PSII is composed of 1 copy each of membrane proteins PsbA, PsbB, PsbC, PsbD, PsbE, PsbF, PsbH, PsbI, PsbJ, PsbK, PsbL, PsbM, PsbT, PsbX, PsbY, PsbZ, Psb30/Ycf12, at least 3 peripheral proteins of the oxygen-evolving complex and a large number of cofactors. It forms dimeric complexes.

It localises to the plastid. The protein localises to the chloroplast thylakoid membrane. Its function is as follows. One of the components of the core complex of photosystem II (PSII). PSII is a light-driven water:plastoquinone oxidoreductase that uses light energy to abstract electrons from H(2)O, generating O(2) and a proton gradient subsequently used for ATP formation. It consists of a core antenna complex that captures photons, and an electron transfer chain that converts photonic excitation into a charge separation. This chain is Photosystem II reaction center protein J, found in Cucumis sativus (Cucumber).